Here is a 122-residue protein sequence, read N- to C-terminus: Large ribosomal subunit protein uL14c (122 aa).

The protein belongs to the universal ribosomal protein uL14 family. As to quaternary structure, part of the 50S ribosomal subunit.

The protein resides in the plastid. It localises to the chloroplast. Its function is as follows. Binds to 23S rRNA. In Ipomoea purpurea (Common morning glory), this protein is Large ribosomal subunit protein uL14c.